A 244-amino-acid chain; its full sequence is MGALGLEGRGGRLQGRGSLLLAVAGATSLVTLLLAVPITVLAVLALVPQDQGGLVTDTADPGAQAQQGLGFQKLPEEEPEADLSPGLPAAHLIGAPLKGQGLGWEATKEQAFLTSGTQFSDADGLALPQDGLYYLYCLVGYRGRAPPGGAEPRGRSVTLRSSLYRAGGAYGPGTPELLLEGAETVTPVLDPAGRQGYGPLWYTSVGFGGLVQLRRGERVYVNISHPDMVDFARGKTFFGAVMVG.

The Cytoplasmic portion of the chain corresponds to 1-18 (MGALGLEGRGGRLQGRGS). The helical; Signal-anchor for type II membrane protein transmembrane segment at 19-48 (LLLAVAGATSLVTLLLAVPITVLAVLALVP) threads the bilayer. At 49-244 (QDQGGLVTDT…KTFFGAVMVG (196 aa)) the chain is on the extracellular side. Positions 88–243 (PAAHLIGAPL…GKTFFGAVMV (156 aa)) constitute a THD domain. The N-linked (GlcNAc...) asparagine glycan is linked to Asn-222.

The protein belongs to the tumor necrosis factor family. Heterotrimer of either two LTB and one LTA subunits or (less prevalent) two LTA and one LTB subunits.

It is found in the membrane. Functionally, cytokine that binds to LTBR/TNFRSF3. May play a specific role in immune response regulation. Provides the membrane anchor for the attachment of the heterotrimeric complex to the cell surface. The chain is Lymphotoxin-beta (LTB) from Macaca mulatta (Rhesus macaque).